The following is a 630-amino-acid chain: Replication protein A 70 kDa DNA-binding subunit B (630 aa).

Residues 200-282 (IIKVRVTSKG…KTVHNDYEMT (83 aa)) constitute a DNA-binding region (OB). The C4-type zinc-finger motif lies at 496 to 516 (CKTCNKKVTEAIGSGYWCEGC).

This sequence belongs to the replication factor A protein 1 family. Heterotrimer of RPA1, RPA2 and RPA3 (canonical replication protein A complex). Interacts with RPA2A. Expressed in root tips, roots, shoot apical meristem (SAM) and young leaves, and at lower levels in mature leaves, flag leaves and ears.

The protein localises to the nucleus. Component of the replication protein A complex (RPA) required for DNA recombination, repair and replication. The activity of RPA is mediated by single-stranded DNA binding and protein interactions. Probably involved in repair of double-strand DNA breaks (DSBs) induced by genotoxic stresses. The sequence is that of Replication protein A 70 kDa DNA-binding subunit B (RPA1B) from Oryza sativa subsp. japonica (Rice).